A 159-amino-acid polypeptide reads, in one-letter code: Ribonuclease H (159 aa).

One can recognise an RNase H type-1 domain in the interval 2–144 (SQDPVIIHTD…ADELATRGLQ (143 aa)). Mg(2+) is bound by residues D11, E50, D72, and D136.

The protein belongs to the RNase H family. As to quaternary structure, monomer. It depends on Mg(2+) as a cofactor.

The protein localises to the cytoplasm. The catalysed reaction is Endonucleolytic cleavage to 5'-phosphomonoester.. Functionally, endonuclease that specifically degrades the RNA of RNA-DNA hybrids. The protein is Ribonuclease H of Mycolicibacterium smegmatis (strain ATCC 700084 / mc(2)155) (Mycobacterium smegmatis).